Here is a 214-residue protein sequence, read N- to C-terminus: Adenylate kinase (214 aa).

An ATP-binding site is contributed by 10 to 15 (GAGKGT). The tract at residues 30–59 (STGDMLRAAVKAGSELGLKAKEIMDAGKLV) is NMP. Residues Thr31, Arg36, 57 to 59 (KLV), 85 to 88 (GFPR), and Gln92 contribute to the AMP site. Residues 122 to 159 (GRRVHAASGRVYHVKFNPPKVEDKDDVTGEELTIRKDD) are LID. ATP contacts are provided by residues Arg123 and 132 to 133 (VY). AMP-binding residues include Arg156 and Arg167. Residue Arg200 participates in ATP binding.

This sequence belongs to the adenylate kinase family. Monomer.

The protein resides in the cytoplasm. It catalyses the reaction AMP + ATP = 2 ADP. It participates in purine metabolism; AMP biosynthesis via salvage pathway; AMP from ADP: step 1/1. Its function is as follows. Catalyzes the reversible transfer of the terminal phosphate group between ATP and AMP. Plays an important role in cellular energy homeostasis and in adenine nucleotide metabolism. The chain is Adenylate kinase from Yersinia pseudotuberculosis serotype O:1b (strain IP 31758).